The sequence spans 369 residues: UPF0284 protein AM1_5137 (369 aa).

The protein belongs to the UPF0284 family.

The chain is UPF0284 protein AM1_5137 from Acaryochloris marina (strain MBIC 11017).